Reading from the N-terminus, the 278-residue chain is Small ribosomal subunit protein uS2 (278 aa).

A disordered region spans residues 233 to 257; sequence IDMEAAGEAPANKGKKKSVKARLDK.

Belongs to the universal ribosomal protein uS2 family.

In Bacteroides thetaiotaomicron (strain ATCC 29148 / DSM 2079 / JCM 5827 / CCUG 10774 / NCTC 10582 / VPI-5482 / E50), this protein is Small ribosomal subunit protein uS2.